The chain runs to 533 residues: UDP-glucuronosyltransferase 1-2 (533 aa).

The signal sequence occupies residues 1–27 (MDTGLCAPLRGLSGLLLLLCALPWAEG). N-linked (GlcNAc...) asparagine glycans are attached at residues Asn133, Asn141, Asn295, and Asn433. A helical membrane pass occupies residues 491–507 (VIGFLLAIVLTVVFIVY).

Belongs to the UDP-glycosyltransferase family.

The protein resides in the microsome. Its subcellular location is the endoplasmic reticulum membrane. It carries out the reaction glucuronate acceptor + UDP-alpha-D-glucuronate = acceptor beta-D-glucuronoside + UDP + H(+). Its function is as follows. UDPGT is of major importance in the conjugation and subsequent elimination of potentially toxic xenobiotics and endogenous compounds. The protein is UDP-glucuronosyltransferase 1-2 (Ugt1a2) of Rattus norvegicus (Rat).